Reading from the N-terminus, the 235-residue chain is RNA pyrophosphohydrolase (235 aa).

The region spanning 6-149 (GFRPNVGIIL…KREVYQLALS (144 aa)) is the Nudix hydrolase domain. Positions 38–59 (GGIKYGETPEQAMFRELHEEVG) match the Nudix box motif. The disordered stretch occupies residues 161–235 (APLSPYGRGG…PDDTAPKDNS (75 aa)). Over residues 171–196 (QHRERDGRDARDSRERSSDQGGRNEQ) the composition is skewed to basic and acidic residues. The span at 203–220 (TVTTTTVIVETVSVSAPT) shows a compositional bias: low complexity.

Belongs to the Nudix hydrolase family. RppH subfamily. The cofactor is a divalent metal cation.

In terms of biological role, accelerates the degradation of transcripts by removing pyrophosphate from the 5'-end of triphosphorylated RNA, leading to a more labile monophosphorylated state that can stimulate subsequent ribonuclease cleavage. The polypeptide is RNA pyrophosphohydrolase (Ralstonia pickettii (strain 12J)).